The chain runs to 179 residues: UPF0227 protein Sbal_2415 (179 aa).

The protein belongs to the UPF0227 family.

This Shewanella baltica (strain OS155 / ATCC BAA-1091) protein is UPF0227 protein Sbal_2415.